A 123-amino-acid polypeptide reads, in one-letter code: MKDQGRSPRKRTGGRRRPNHKKKKHELGKDTVETQVGEQRLKTVDSRGNTQKVRAVKTDVASIADGAETIEATIENVVENPSNPNYARRNIITKGAILETSEGQARVTSRPGQHGQVNAVLVE.

Residues 1–38 form a disordered region; that stretch reads MKDQGRSPRKRTGGRRRPNHKKKKHELGKDTVETQVGE. Basic residues predominate over residues 7–26; the sequence is SPRKRTGGRRRPNHKKKKHE.

In terms of assembly, part of the 30S ribosomal subunit.

The sequence is that of Small ribosomal subunit protein eS8 (rps8e) from Haloarcula marismortui (strain ATCC 43049 / DSM 3752 / JCM 8966 / VKM B-1809) (Halobacterium marismortui).